The chain runs to 242 residues: NADPH-dependent pterin aldehyde reductase (242 aa).

Threonine 2 bears the N-acetylthreonine mark. Residue 21 to 50 (LITGVSKGLGRALALELAKRGHTVIGCARS) coordinates NADP(+). Serine 153 contacts substrate. Tyrosine 166 acts as the Proton acceptor in catalysis. NADP(+) is bound at residue lysine 170.

Belongs to the short-chain dehydrogenases/reductases (SDR) family. Homodimer. In terms of tissue distribution, mostly expressed in seeds, and, to a lower extent, in roots, leaves, flowers and siliques.

The protein resides in the cytoplasm. In terms of biological role, NADPH-dependent pterin aldehyde reductase involved in pterin aldehyde salvage during folate turnover. Catalyzes the reduction of diverse aromatic and aliphatic aldehydes (e.g. acetaldehyde, n-propanal, 1-naphthaldehyde, benzaldehyde, cinnamaldehyde, n-butanal, n-hexanal, n-pentanal, 2-naphthaldehyde, n-octanal, n-nonanal and n-heptanal), in addition to the conversion of pterin-6-aldehyde (PtCHO) to 6-hydroxymethylpterin (PtCH(2)OH), and the conversion of dihydropterin-6-aldehyde (H(2)PtCHO) to 6-hydroxymethyldihydropterin (H(2)PtCH(2)OH). Cannot reduce the pterin ring. In Arabidopsis thaliana (Mouse-ear cress), this protein is NADPH-dependent pterin aldehyde reductase.